The sequence spans 196 residues: MSEKATEIANLLGPTVESLGLELLGVEYLPAPGGATLRLYIDVPLAEQPDRIINVDDCERVSREVSAQLDVEDPISGNYTLEVSSPGVDRPLFTLDQFARHVGESAKIVLKLAQDGRRRFQGQIVRIDTEAAAVVFSVDGKDVQIGFDNIDKARILPDWVALGLAPQKPNKPGPKKPGHDKKKPSNEPAAGKPRAE.

The tract at residues 164 to 196 (LAPQKPNKPGPKKPGHDKKKPSNEPAAGKPRAE) is disordered. Residues 173–182 (GPKKPGHDKK) show a composition bias toward basic residues.

The protein belongs to the RimP family.

The protein localises to the cytoplasm. Its function is as follows. Required for maturation of 30S ribosomal subunits. This Xanthomonas campestris pv. campestris (strain B100) protein is Ribosome maturation factor RimP.